The primary structure comprises 133 residues: Small ribosomal subunit protein uS9 (133 aa).

The segment at 114–133 (VERKKYGKKKARRSPQFSKR) is disordered. A compositionally biased stretch (basic residues) spans 118-133 (KYGKKKARRSPQFSKR).

The protein belongs to the universal ribosomal protein uS9 family.

This chain is Small ribosomal subunit protein uS9, found in Fusobacterium nucleatum subsp. nucleatum (strain ATCC 25586 / DSM 15643 / BCRC 10681 / CIP 101130 / JCM 8532 / KCTC 2640 / LMG 13131 / VPI 4355).